Reading from the N-terminus, the 505-residue chain is Glutamate--tRNA ligase (505 aa).

The 'HIGH' region signature appears at 12 to 22; it reads PSPTGPLHIGG. A 'KMSKS' region motif is present at residues 260–264; sequence KLSKR. Lys-263 contributes to the ATP binding site.

This sequence belongs to the class-I aminoacyl-tRNA synthetase family. Glutamate--tRNA ligase type 1 subfamily. In terms of assembly, monomer.

The protein localises to the cytoplasm. It catalyses the reaction tRNA(Glu) + L-glutamate + ATP = L-glutamyl-tRNA(Glu) + AMP + diphosphate. Functionally, catalyzes the attachment of glutamate to tRNA(Glu) in a two-step reaction: glutamate is first activated by ATP to form Glu-AMP and then transferred to the acceptor end of tRNA(Glu). The polypeptide is Glutamate--tRNA ligase (Porphyromonas gingivalis (strain ATCC BAA-308 / W83)).